The sequence spans 1121 residues: MGNIKFLLLVFFLIVVVVNGCWEEERNALLELQTNIMSSNGELLVDWAGYNAAHFVDCCFWDRVKCSLETGRVIKLDLEADFGTGDGWLFNASLFLPFKSLQVLLLSSQNIIGWTKNEGFSKLRQLPNLKEVDLQYNPIDPKVLLSSLCWISSLEVLKLGVDVDTSFSIPMTYNTNMMSKKCGGLSNLRELWFEGYEINDINILSALGELRNLEKLILDDNNFNSTIFSSLKIFPSLKHLNLAANEINGNVEMNDIIDLSNLEYLDLSDNNIHSFATTKGNKKMTSLRSLLLGSSYSNSSRVIRSLKSFSSLKSLSYKNSNLTSPSIIYALRNLSTVEYLYFKGSSLNDNFLPNIGQMTSLKVLNMPSGGNNGTLPNQGWCELKYIEELDFLNNNFVGTLPLCLGNLTSLRWLSLAGNNLHGNIASHSIWRRLTSLEYLDIADNQFDVPLSFSQFSDHKKLIYLNVGYNTIITDTEYQNWIPNFQLEFFAIQRCIALQKLPSFLHYQYDLRILAIEGNQLQGKFPTWLLENNTRLAAIYGRDNAFSGPLKLPSSVHLHLEAVDVSNNKLNGHIPQNMSLAFPKLLSLNMSHNHLEGPIPSKISGIYLTILDLSVNFLSGEVPGDLAVVDSPQLFYLRLSNNKLKGKIFSEEFRPHVLSFLYLNDNNFEGALPSNVFLSSLITLDASRNNFSGEIPGCTRDNRRLLQLDLSKNHLQGLIPVEICNLKIINVLAISENKISGSIPSCVSSLPLKHIHLQKNQLGGELGHVIFNFSSLITLDLRYNNFAGNIPYTIGSLSNLNYLLLSNNKLEGDIPTQICMLNNLSIVDLSFNKLYGPLPPCLGYLTQTKKDAEISWTYFAENYRGSWLNFVIWMRSKRHYHDSHGLLSDLFLMDVETQVQFSTKKNSYTYKGNILKYMSGIDLSSNRLTGEIPVELGNMSNIHALNLSHNHLNGRIPNTFSNLQEIESLDLSCNRLNGSIPVGLLELNSLAVFSVAYNNLSGAVPDFKAQFGTFNKSSYEGNPFLCGYPLDNKCGMSPKLSNTSNINGDEESSELEDIQCFYIGFVVSFGAILLGLAAALCLNRHWRRAWFRMIEALMFYCYYFVLDNIVTPIKSRWYKNVG.

A signal peptide spans 1 to 20 (MGNIKFLLLVFFLIVVVVNG). The Extracellular segment spans residues 21–1058 (CWEEERNALL…EESSELEDIQ (1038 aa)). Asn-91 carries N-linked (GlcNAc...) asparagine glycosylation. LRR repeat units lie at residues 98–122 (FKSLQVLLLSSQNIIGWTKNEGFSK), 126–152 (LPNLKEVDLQYNPIDPKVLLSSLCWIS), 185–209 (LSNLRELWFEGYEINDINILSALGE), 210–233 (LRNLEKLILDDNNFNSTIFSSLKI), 234–259 (FPSLKHLNLAANEINGNVEMNDIIDL), 260–282 (SNLEYLDLSDNNIHSFATTKGNK), 284–308 (MTSLRSLLLGSSYSNSSRVIRSLKS), and 309–331 (FSSLKSLSYKNSNLTSPSIIYAL). N-linked (GlcNAc...) asparagine glycosylation is present at Asn-224. Asn-298, Asn-321, and Asn-333 each carry an N-linked (GlcNAc...) asparagine glycan. The stretch at 334 to 360 (LSTVEYLYFKGSSLNDNFLPNIGQMTS) is one LRR 9 repeat. N-linked (GlcNAc...) asparagine glycosylation is found at Asn-372 and Asn-406. 21 LRR repeats span residues 383–406 (LKYIEELDFLNNNFVGTLPLCLGN), 407–432 (LTSLRWLSLAGNNLHGNIASHSIWRR), 433–457 (LTSLEYLDIADNQFDVPLSFSQFSD), 459–479 (KKLIYLNVGYNTIITDTEYQN), 507–531 (QYDLRILAIEGNQLQGKFPTWLLEN), 556–580 (HLHLEAVDVSNNKLNGHIPQNMSLA), 581–605 (FPKLLSLNMSHNHLEGPIPSKISGI), 607–628 (LTILDLSVNFLSGEVPGDLAVV), 630–654 (SPQLFYLRLSNNKLKGKIFSEEFRP), 655–678 (HVLSFLYLNDNNFEGALPSNVFLS), 680–701 (LITLDASRNNFSGEIPGCTRDN), 702–725 (RRLLQLDLSKNHLQGLIPVEICNL), 726–749 (KIINVLAISENKISGSIPSCVSSL), 751–772 (LKHIHLQKNQLGGELGHVIFNF), 773–796 (SSLITLDLRYNNFAGNIPYTIGSL), 797–820 (SNLNYLLLSNNKLEGDIPTQICML), 822–846 (NLSIVDLSFNKLYGPLPPCLGYLTQ), 914–938 (LKYMSGIDLSSNRLTGEIPVELGNM), 939–961 (SNIHALNLSHNHLNGRIPNTFSN), 962–986 (LQEIESLDLSCNRLNGSIPVGLLEL), and 988–1012 (SLAVFSVAYNNLSGAVPDFKAQFGT). N-linked (GlcNAc...) asparagine glycosylation is found at Asn-531, Asn-576, and Asn-588. N-linked (GlcNAc...) asparagine glycosylation occurs at Asn-689. A glycan (N-linked (GlcNAc...) asparagine) is linked at Asn-771. 7 N-linked (GlcNAc...) asparagine glycosylation sites follow: Asn-822, Asn-937, Asn-945, Asn-976, Asn-998, Asn-1014, and Asn-1041. Residues 1059–1079 (CFYIGFVVSFGAILLGLAAAL) form a helical membrane-spanning segment. The Cytoplasmic portion of the chain corresponds to 1080-1121 (CLNRHWRRAWFRMIEALMFYCYYFVLDNIVTPIKSRWYKNVG).

Belongs to the RLP family. In terms of assembly, interacts with an 11 kDa glycine-rich protein (GRP) of C.reflexa. Interacts with SOBIR1 and SOBIR1-like kinases; presence or absence of GRP has no effect on interaction.

It localises to the cell membrane. It is found in the cell surface. In terms of biological role, involved in plant defense. Contributes to resistance against parasitic plant C.reflexa. Acts as a receptor for the 11 kDa glycine-rich protein (GRP) of C.reflexa inducing immune responses such as emission of stress-related phytohormone ethylene, reactive oxygen species (ROS) release, and hypersensitive cell death. Recognizes a specific pathogen-associated molecular pattern (PAMP), a cysteine-rich peptide 21 (crip21), from GRP located on the cell wall of C.reflexa. This is Cuscuta receptor 1 from Solanum lycopersicum (Tomato).